Reading from the N-terminus, the 639-residue chain is Far upstream element-binding protein 1 (639 aa).

Disordered regions lie at residues 1–27 (MADYSTVPPPSSGSAGGGGGGGVNDAF) and 40–88 (KIGG…LPPM). Ala2 carries the N-acetylalanine modification. The segment covering 14 to 23 (SAGGGGGGGV) has biased composition (gly residues). 2 positions are modified to phosphoserine: Ser48 and Ser51. Basic and acidic residues predominate over residues 61–73 (RPLEDGDQPDAKK). KH domains lie at 95–159 (VMTE…KRLL), 180–246 (NAVQ…KEMV), and 270–334 (NEGI…AEII). At Ser135 the chain carries Phosphoserine. Thr148 carries the phosphothreonine modification. Residues Arg316, Arg354, Arg356, and Arg358 each carry the omega-N-methylarginine modification. A disordered region spans residues 341 to 360 (VQAGNPGGPGPGGRGRGRGQ). Residues 345-360 (NPGGPGPGGRGRGRGQ) are compositionally biased toward gly residues. Positions 371 to 438 (LQEFNFIVPT…QQIDYARQLI (68 aa)) constitute a KH 4 domain. Thr427 is subject to Phosphothreonine. Disordered stretches follow at residues 442-527 (IGGP…GTDP) and 543-574 (QAQPPPAAPAGAPTTTQTNGQGDQQNPAPAGQ). Pro residues predominate over residues 463–500 (PHGPPGPPGPGTPMGPYNPAPYNPGPPGPAPHGPPAPY). Residues 551 to 568 (PAGAPTTTQTNGQGDQQN) show a composition bias toward low complexity. At Ser625 the chain carries Phosphoserine.

As to quaternary structure, found in a complex with PUF60 and far upstream element (FUSE) DNA segment. Interacts with PUF60 and JTV1. Post-translationally, ubiquitinated. This targets the protein for proteasome-mediated degradation.

The protein resides in the nucleus. In terms of biological role, regulates MYC expression by binding to a single-stranded far-upstream element (FUSE) upstream of the MYC promoter. May act both as activator and repressor of transcription. The chain is Far upstream element-binding protein 1 from Rattus norvegicus (Rat).